Reading from the N-terminus, the 258-residue chain is Small ribosomal subunit protein uS2 (258 aa).

This sequence belongs to the universal ribosomal protein uS2 family.

This Granulibacter bethesdensis (strain ATCC BAA-1260 / CGDNIH1) protein is Small ribosomal subunit protein uS2.